A 159-amino-acid polypeptide reads, in one-letter code: Ubiquitin-conjugating enzyme E2 variant 1B (159 aa).

A UBC core domain is found at P11–M159.

This sequence belongs to the ubiquitin-conjugating enzyme family. Heterodimer with UBC35 or UBC36. As to expression, expressed in roots, shoots, leaves, stems and flowers, but not in pollen.

Has no ubiquitin ligase activity on its own. The heterodimer with UBC catalyzes the synthesis of non-canonical poly-ubiquitin chains that are linked through 'Lys-63'. This type of poly-ubiquitination does not lead to protein degradation by the proteasome. Mediates transcriptional activation of target genes. May play a role in the control of progress through the cell cycle and differentiation. May play a role in the error-free DNA repair pathway and contributes to the survival of cells after DNA damage. In Arabidopsis thaliana (Mouse-ear cress), this protein is Ubiquitin-conjugating enzyme E2 variant 1B (UEV1B).